Consider the following 219-residue polypeptide: tRNA (guanine-N(7)-)-methyltransferase (219 aa).

Residues Glu-46, Glu-71, Asp-100, and Asp-122 each coordinate S-adenosyl-L-methionine. Residue Asp-122 is part of the active site. Substrate is bound at residue Lys-126. Residues 128-133 are interaction with RNA; that stretch reads KHEKRR. Substrate is bound by residues Asp-158 and 199 to 202; that span reads TEYE.

It belongs to the class I-like SAM-binding methyltransferase superfamily. TrmB family.

The catalysed reaction is guanosine(46) in tRNA + S-adenosyl-L-methionine = N(7)-methylguanosine(46) in tRNA + S-adenosyl-L-homocysteine. Its pathway is tRNA modification; N(7)-methylguanine-tRNA biosynthesis. In terms of biological role, catalyzes the formation of N(7)-methylguanine at position 46 (m7G46) in tRNA. This Oenococcus oeni (strain ATCC BAA-331 / PSU-1) protein is tRNA (guanine-N(7)-)-methyltransferase.